The following is a 202-amino-acid chain: NAD(P)H-quinone oxidoreductase chain 6 (202 aa).

The next 5 membrane-spanning stretches (helical) occupy residues 9-29 (VVSF…VVLA), 32-52 (IVYS…MYLL), 61-81 (AQVL…IMLV), 98-118 (VLTA…VLAT), and 144-164 (FLLP…GAII).

This sequence belongs to the complex I subunit 6 family.

Its subcellular location is the membrane. The enzyme catalyses a plastoquinone + NADH + (n+1) H(+)(in) = a plastoquinol + NAD(+) + n H(+)(out). The catalysed reaction is a plastoquinone + NADPH + (n+1) H(+)(in) = a plastoquinol + NADP(+) + n H(+)(out). In terms of biological role, NDH-1 shuttles electrons from NAD(P)H, via FMN and iron-sulfur (Fe-S) centers, to quinones in the respiratory chain. The immediate electron acceptor for the enzyme in this species is believed to be plastoquinone. Couples the redox reaction to proton translocation (for every two electrons transferred, four hydrogen ions are translocated across the cytoplasmic membrane), and thus conserves the redox energy in a proton gradient. This is NAD(P)H-quinone oxidoreductase chain 6 (ndhG) from Nostoc sp. (strain PCC 7120 / SAG 25.82 / UTEX 2576).